Reading from the N-terminus, the 192-residue chain is uncharacterized protein (192 aa).

One can recognise a Nudix hydrolase domain in the interval 29–160; it reads HRQAAVLIPI…PLDIYRRGDS (132 aa). The short motif at 67–89 is the Nudix box element; that stretch reads GAVDDTDASVIAAALREAEEEVA. E83 and E87 together coordinate Mg(2+).

The protein belongs to the Nudix hydrolase family. PCD1 subfamily. Mn(2+) is required as a cofactor. Mg(2+) serves as cofactor.

Its function is as follows. Probably mediates the hydrolysis of some nucleoside diphosphate derivatives. This is an uncharacterized protein from Escherichia coli (strain SMS-3-5 / SECEC).